The primary structure comprises 477 residues: tRNA-2-methylthio-N(6)-dimethylallyladenosine synthase (477 aa).

The MTTase N-terminal domain maps to 13–130 (GGLFIKTYGC…LPAMIEEALA (118 aa)). Positions 22, 59, 93, 178, 182, and 185 each coordinate [4Fe-4S] cluster. Residues 164–396 (ESNGVSAFVS…QAMLNEQTAA (233 aa)) form the Radical SAM core domain. One can recognise a TRAM domain in the interval 399-462 (EGMVGTTQRV…ANSLKGKLVA (64 aa)).

The protein belongs to the methylthiotransferase family. MiaB subfamily. As to quaternary structure, monomer. Requires [4Fe-4S] cluster as cofactor.

Its subcellular location is the cytoplasm. The enzyme catalyses N(6)-dimethylallyladenosine(37) in tRNA + (sulfur carrier)-SH + AH2 + 2 S-adenosyl-L-methionine = 2-methylsulfanyl-N(6)-dimethylallyladenosine(37) in tRNA + (sulfur carrier)-H + 5'-deoxyadenosine + L-methionine + A + S-adenosyl-L-homocysteine + 2 H(+). Functionally, catalyzes the methylthiolation of N6-(dimethylallyl)adenosine (i(6)A), leading to the formation of 2-methylthio-N6-(dimethylallyl)adenosine (ms(2)i(6)A) at position 37 in tRNAs that read codons beginning with uridine. The polypeptide is tRNA-2-methylthio-N(6)-dimethylallyladenosine synthase (Hydrogenovibrio crunogenus (strain DSM 25203 / XCL-2) (Thiomicrospira crunogena)).